The primary structure comprises 88 residues: Large ribosomal subunit protein eL20 (88 aa).

This sequence belongs to the eukaryotic ribosomal protein eL20 family. Part of the 50S ribosomal subunit. Binds 23S rRNA.

This is Large ribosomal subunit protein eL20 from Aeropyrum pernix (strain ATCC 700893 / DSM 11879 / JCM 9820 / NBRC 100138 / K1).